The chain runs to 99 residues: U1-theraphotoxin-Lsp1b (99 aa).

The signal sequence occupies residues 1-23; sequence MRSLTLAALLLCSLLLVFHTSAA. Residues 24–50 constitute a propeptide that is removed on maturation; it reads EELQAQEGHLMIPGDTDTALETVDDER. Cystine bridges form between Cys54–Cys67, Cys58–Cys91, Cys72–Cys74, and Cys85–Cys96.

This sequence belongs to the neurotoxin 12 (Hwtx-2) family. 04 (lasiotoxin) subfamily. Expressed by the venom gland.

It is found in the secreted. Its function is as follows. Toxin that causes irreversible contractile paralysis into adult Aedes aegypti resulting in 100% mortality after 24 hours. The chain is U1-theraphotoxin-Lsp1b from Lasiodora sp. (strain IBSP 8539) (Brazilian salmon pink birdeater).